A 421-amino-acid polypeptide reads, in one-letter code: Atrochrysone carboxyl ACP thioesterase (421 aa).

The Zn(2+) site is built by His207, His209, Asp211, and His212. Asp211 serves as the catalytic Proton donor/acceptor.

This sequence belongs to the metallo-beta-lactamase superfamily. It depends on Zn(2+) as a cofactor. As to expression, specifically expressed in conidia.

It catalyses the reaction atrochrysone carboxyl-[ACP] + H2O = atrochrysone carboxylate + holo-[ACP] + H(+). Its pathway is secondary metabolite biosynthesis. Functionally, atrochrysone carboxyl ACP thioesterase; part of the gene cluster that mediates the biosynthesis of trypacidin, a mycotoxin with antiprotozoal activity and that plays a role in the infection process. The pathway begins with the synthesis of atrochrysone thioester by the polyketide synthase (PKS) tpcC. The atrochrysone carboxyl ACP thioesterase tpcB then breaks the thioester bond and releases the atrochrysone carboxylic acid from tpcC. The decarboxylase tpcK converts atrochrysone carboxylic acid to atrochrysone which is further reduced into emodin anthrone. The next step is performed by the emodin anthrone oxygenase tpcL that catalyzes the oxidation of emodin anthrone to emodin. Emodin O-methyltransferase encoded by tpcA catalyzes methylation of the 8-hydroxy group of emodin to form questin. Ring cleavage of questin by questin oxidase tpcI leads to desmethylsulochrin via several intermediates including questin epoxide. Another methylation step catalyzed by tpcM leads to the formation of sulochrin which is further converted to monomethylsulfochrin by tpcH. Finally, the tpcJ catalyzes the conversion of monomethylsulfochrin to trypacidin. Trypacidin is toxic for human pulmonary and bronchial epithelial cells by initiating the intracellular formation of nitric oxide (NO) and hydrogen peroxide (H(2)O(2)), thus triggering host necrotic cell death. The trypacidin pathway is also able to produce endocrocin via a distinct route from the endocrocin Enc pathway. The polypeptide is Atrochrysone carboxyl ACP thioesterase (Aspergillus fumigatus (strain ATCC MYA-4609 / CBS 101355 / FGSC A1100 / Af293) (Neosartorya fumigata)).